The sequence spans 749 residues: Photosystem I P700 chlorophyll a apoprotein A2 (749 aa).

The next 8 membrane-spanning stretches (helical) occupy residues 46-69 (LFST…FHIA), 135-158 (LYQG…LHLQ), 175-199 (MNHH…HVAI), 273-291 (ISHH…GHMY), 343-366 (LHFQ…HHMG), 382-408 (AALY…IFFV), 430-452 (ALIS…LYLH), and 532-550 (FLVH…LILI). 2 residues coordinate [4Fe-4S] cluster: C574 and C583. 2 helical membrane-spanning segments follow: residues 590–611 (STYM…YWHW) and 658–680 (LSPW…MFLI). Positions 669, 677, and 685 each coordinate divinyl chlorophyll a. W686 is a phylloquinone binding site. Residues 722–742 (LVGVTHFAVGNIFTFGAFVIA) form a helical membrane-spanning segment.

Belongs to the PsaA/PsaB family. The PsaA/B heterodimer binds the P700 chlorophyll special pair and subsequent electron acceptors. PSI consists of a core antenna complex that captures photons, and an electron transfer chain that converts photonic excitation into a charge separation. The cyanobacterial PSI reaction center is composed of one copy each of PsaA,B,C,D,E,F,I,J,K,L,M and X, and forms trimeric complexes. It depends on PSI electron transfer chain: 5 divinyl chlorophyll a, 1 divinyl chlorophyll a', 2 phylloquinones and 3 4Fe-4S clusters. PSI core antenna: 90 divinyl chlorophyll a, 22 carotenoids, 3 phospholipids and 1 galactolipid. P700 is a divinyl chlorophyll a/divinyl chlorophyll a' dimer, A0 is one or more divinyl chlorophyll a, A1 is one or both phylloquinones and FX is a shared 4Fe-4S iron-sulfur center. as a cofactor.

The protein localises to the cellular thylakoid membrane. The enzyme catalyses reduced [plastocyanin] + hnu + oxidized [2Fe-2S]-[ferredoxin] = oxidized [plastocyanin] + reduced [2Fe-2S]-[ferredoxin]. Functionally, psaA and PsaB bind P700, the primary electron donor of photosystem I (PSI), as well as the electron acceptors A0, A1 and FX. PSI is a plastocyanin/cytochrome c6-ferredoxin oxidoreductase, converting photonic excitation into a charge separation, which transfers an electron from the donor P700 chlorophyll pair to the spectroscopically characterized acceptors A0, A1, FX, FA and FB in turn. Oxidized P700 is reduced on the lumenal side of the thylakoid membrane by plastocyanin or cytochrome c6. This Prochlorococcus marinus (strain MIT 9313) protein is Photosystem I P700 chlorophyll a apoprotein A2.